Consider the following 69-residue polypeptide: Ribosome modulation factor (69 aa).

It belongs to the ribosome modulation factor family.

It localises to the cytoplasm. During stationary phase, converts 70S ribosomes to an inactive dimeric form (100S ribosomes). This is Ribosome modulation factor from Chromohalobacter salexigens (strain ATCC BAA-138 / DSM 3043 / CIP 106854 / NCIMB 13768 / 1H11).